An 83-amino-acid polypeptide reads, in one-letter code: Cytochrome b559 subunit alpha (83 aa).

The chain crosses the membrane as a helical span at residues 21 to 35 (IIHTITVPMLFLAGW). Heme is bound at residue His-23.

The protein belongs to the PsbE/PsbF family. As to quaternary structure, heterodimer of an alpha subunit and a beta subunit. PSII is composed of 1 copy each of membrane proteins PsbA, PsbB, PsbC, PsbD, PsbE, PsbF, PsbH, PsbI, PsbJ, PsbK, PsbL, PsbM, PsbT, PsbX, PsbY, PsbZ, Psb30/Ycf12, peripheral proteins PsbO, CyanoQ (PsbQ), PsbU, PsbV and a large number of cofactors. It forms dimeric complexes. It depends on heme b as a cofactor.

The protein resides in the cellular thylakoid membrane. Functionally, this b-type cytochrome is tightly associated with the reaction center of photosystem II (PSII). PSII is a light-driven water:plastoquinone oxidoreductase that uses light energy to abstract electrons from H(2)O, generating O(2) and a proton gradient subsequently used for ATP formation. It consists of a core antenna complex that captures photons, and an electron transfer chain that converts photonic excitation into a charge separation. This chain is Cytochrome b559 subunit alpha, found in Acaryochloris marina (strain MBIC 11017).